We begin with the raw amino-acid sequence, 382 residues long: Innexin-8 (382 aa).

The next 4 membrane-spanning stretches (helical) occupy residues 29-49 (LITAFLFITAAILTSAKTYVG), 103-123 (QWSSMYLAVAGIAFMIPKFLW), 187-207 (VIKILYLVNAIAQFVIIAIFL), and 270-290 (IFLFFWFWLVFLVFSTLIAHF).

The protein belongs to the pannexin family.

The protein localises to the cell membrane. Its subcellular location is the cell junction. It is found in the gap junction. In terms of biological role, structural component of the gap junctions. The chain is Innexin-8 (inx-8) from Caenorhabditis elegans.